A 216-amino-acid chain; its full sequence is UPF0502 protein Pfl01_3711 (216 aa).

It belongs to the UPF0502 family.

This Pseudomonas fluorescens (strain Pf0-1) protein is UPF0502 protein Pfl01_3711.